Consider the following 309-residue polypeptide: Sulfate adenylyltransferase subunit 2 (309 aa).

Belongs to the PAPS reductase family. CysD subfamily. In terms of assembly, heterodimer composed of CysD, the smaller subunit, and CysN.

The enzyme catalyses sulfate + ATP + H(+) = adenosine 5'-phosphosulfate + diphosphate. Its pathway is sulfur metabolism; hydrogen sulfide biosynthesis; sulfite from sulfate: step 1/3. In terms of biological role, with CysN forms the ATP sulfurylase (ATPS) that catalyzes the adenylation of sulfate producing adenosine 5'-phosphosulfate (APS) and diphosphate, the first enzymatic step in sulfur assimilation pathway. APS synthesis involves the formation of a high-energy phosphoric-sulfuric acid anhydride bond driven by GTP hydrolysis by CysN coupled to ATP hydrolysis by CysD. The chain is Sulfate adenylyltransferase subunit 2 from Aeromonas salmonicida (strain A449).